Here is a 577-residue protein sequence, read N- to C-terminus: Efflux pump notK' (577 aa).

N-linked (GlcNAc...) asparagine glycans are attached at residues N62 and N84. The next 5 membrane-spanning stretches (helical) occupy residues 104 to 124 (AAIASVASFFLGLLANLPVAL), 151 to 171 (LAVTAVFVEGWIFLGLTMLGI), 189 to 209 (AGIGLYLTLIGLSYSAGLGLV), 241 to 261 (NPTMWIGIFCGGFFTVFLMMY), and 265 to 285 (GAVIAGILLVSIISWPRTTPV). The N-linked (GlcNAc...) asparagine glycan is linked to N320. 5 helical membrane passes run 328 to 348 (FGLALITFLYVDILDATGTLY), 373 to 393 (VDAICISIGSLFGSPPVTAFV), 413 to 433 (GICFFIAVFFAPIFASIPPWA), 434 to 454 (TGSTLVIVGSMMMHATLEINW), and 476 to 496 (IADGLIAGIISYILINGGVWV). Residues 555–566 (MPPNGSMSSGSP) show a composition bias toward low complexity. Residues 555 to 577 (MPPNGSMSSGSPEQVAEKAVGKY) are disordered. The N-linked (GlcNAc...) asparagine glycan is linked to N558.

This sequence belongs to the nucleobase:cation symporter-2 (NCS2) (TC 2.A.40) family. Azg-like subfamily.

It localises to the cell membrane. Its function is as follows. Efflux pump; part of the gene cluster that mediates the biosynthesis of notoamide, a fungal indole alkaloid that belongs to a family of natural products containing a characteristic bicyclo[2.2.2]diazaoctane core. The chain is Efflux pump notK' from Aspergillus versicolor.